Consider the following 162-residue polypeptide: Phosphopantetheine adenylyltransferase (162 aa).

Threonine 9 provides a ligand contact to substrate. Residues threonine 9–phenylalanine 10 and histidine 17 each bind ATP. Positions 41, 77, and 91 each coordinate substrate. ATP is bound by residues glycine 92 to arginine 94, glutamate 102, and arginine 127 to lysine 133.

The protein belongs to the bacterial CoaD family. As to quaternary structure, homohexamer. The cofactor is Mg(2+).

Its subcellular location is the cytoplasm. It catalyses the reaction (R)-4'-phosphopantetheine + ATP + H(+) = 3'-dephospho-CoA + diphosphate. The protein operates within cofactor biosynthesis; coenzyme A biosynthesis; CoA from (R)-pantothenate: step 4/5. Functionally, reversibly transfers an adenylyl group from ATP to 4'-phosphopantetheine, yielding dephospho-CoA (dPCoA) and pyrophosphate. The protein is Phosphopantetheine adenylyltransferase of Cereibacter sphaeroides (strain ATCC 17025 / ATH 2.4.3) (Rhodobacter sphaeroides).